Here is a 317-residue protein sequence, read N- to C-terminus: Protoheme IX farnesyltransferase (317 aa).

9 helical membrane passes run 28 to 48 (IIPL…HGHI), 53 to 73 (LLIT…LNCI), 101 to 121 (LIFA…FVNL), 122 to 142 (LSAC…THWL), 150 to 170 (IVIG…AVTG), 178 to 198 (ILFA…ALMI), 223 to 243 (IWIY…PFQA), 246 to 266 (LFYA…AWEL), and 282 to 302 (YSIL…LPAV).

It belongs to the UbiA prenyltransferase family. Protoheme IX farnesyltransferase subfamily.

It localises to the cell inner membrane. The catalysed reaction is heme b + (2E,6E)-farnesyl diphosphate + H2O = Fe(II)-heme o + diphosphate. Its pathway is porphyrin-containing compound metabolism; heme O biosynthesis; heme O from protoheme: step 1/1. Functionally, converts heme B (protoheme IX) to heme O by substitution of the vinyl group on carbon 2 of heme B porphyrin ring with a hydroxyethyl farnesyl side group. In Picosynechococcus sp. (strain ATCC 27264 / PCC 7002 / PR-6) (Agmenellum quadruplicatum), this protein is Protoheme IX farnesyltransferase.